The following is a 688-amino-acid chain: Elongation factor G (688 aa).

The tr-type G domain maps to 8-282 (DKFRNFGIMA…GVVDYLPSPL (275 aa)). Residues 17–24 (AHIDAGKT), 81–85 (DTPGH), and 135–138 (NKMD) each bind GTP.

Belongs to the TRAFAC class translation factor GTPase superfamily. Classic translation factor GTPase family. EF-G/EF-2 subfamily.

It localises to the cytoplasm. Its function is as follows. Catalyzes the GTP-dependent ribosomal translocation step during translation elongation. During this step, the ribosome changes from the pre-translocational (PRE) to the post-translocational (POST) state as the newly formed A-site-bound peptidyl-tRNA and P-site-bound deacylated tRNA move to the P and E sites, respectively. Catalyzes the coordinated movement of the two tRNA molecules, the mRNA and conformational changes in the ribosome. The protein is Elongation factor G of Clostridium beijerinckii (strain ATCC 51743 / NCIMB 8052) (Clostridium acetobutylicum).